We begin with the raw amino-acid sequence, 671 residues long: Fusexin 1 (671 aa).

The Cytoplasmic segment spans residues 1–12; that stretch reads MRAVSDFLKNKW. The helical transmembrane segment at 13-33 threads the bilayer; sequence VAVPAVALLILSLGFLAQNYI. The Extracellular portion of the chain corresponds to 34–574; the sequence is TGSFVSGDQI…DPFCADGPLE (541 aa). Cystine bridges form between C145-C180, C409-C452, C480-C500, and C513-C528. The interval 168-173 is fusion loop; the sequence is GAIADY. A helical transmembrane segment spans residues 575–595; the sequence is MLSKMFHLVAGTAVAFFTGSL. The Cytoplasmic segment spans residues 596–628; the sequence is GYRAGRWVDGEYQIKGGFDPLKSRSVSRAKRGR. A helical membrane pass occupies residues 629–649; sequence FLIGLIAELVSFLLGFYVILL. Position 650 (V650) is a topological domain, extracellular. A helical membrane pass occupies residues 651–671; that stretch reads PIWAQLMVILGYVLFKYYTPF.

The protein belongs to the HAP2/GCS1 family. Fusexin 1 subfamily. In terms of assembly, homotrimer stabilized by interdomain contacts and numerous Ca(2+) and Na(+) ions.

The protein resides in the cell surface. The protein localises to the cell membrane. Functionally, exhibits fusogenic activity. Mediates cell-cell fusion in mammalian cells (bilateral fusion). In Natrinema altunense (strain JCM 12890 / CGMCC 1.3731 / AJ2), this protein is Fusexin 1.